A 541-amino-acid chain; its full sequence is Membrane protein insertase YidC (541 aa).

Residues 6 to 26 (SLLVLALIFISFLVYQQWQLD) traverse the membrane as a helical segment. Positions 34-56 (EQTTSITATSDVPASSPSNSQAI) are disordered. Transmembrane regions (helical) follow at residues 337–357 (FWLLTFIQGIVSNWGLAIICV), 416–436 (LGGCLPILLQMPIFIALYWTF), 454–474 (LSAQDPYYILPILMGISMFLL), and 495–515 (PLVFMFFFLWFPSGLVLYWLV).

This sequence belongs to the OXA1/ALB3/YidC family. Type 1 subfamily. In terms of assembly, interacts with the Sec translocase complex via SecD. Specifically interacts with transmembrane segments of nascent integral membrane proteins during membrane integration.

It is found in the cell inner membrane. In terms of biological role, required for the insertion and/or proper folding and/or complex formation of integral membrane proteins into the membrane. Involved in integration of membrane proteins that insert both dependently and independently of the Sec translocase complex, as well as at least some lipoproteins. Aids folding of multispanning membrane proteins. In Haemophilus influenzae (strain 86-028NP), this protein is Membrane protein insertase YidC.